A 366-amino-acid polypeptide reads, in one-letter code: Latent membrane protein 1 (366 aa).

Topologically, residues 1-23 (MERDLERGPPGPPRPPLGPPLSS) are cytoplasmic. Residues 24 to 44 (SIGLALLLLLLALLFWLYIVL) form a helical membrane-spanning segment. Topologically, residues 45–51 (SNWTGGA) are extracellular. A helical membrane pass occupies residues 52 to 72 (LLVLYSFALMLIIIILIIFIF). The Cytoplasmic segment spans residues 73–75 (RRD). A helical transmembrane segment spans residues 76–96 (LLCPLGGLGLLLLMVTLLLIA). Over 97-106 (LWNLHGQALY) the chain is Extracellular. Residues 107-127 (LGIVLFIFGCLLVLGLWIYFL) form a helical membrane-spanning segment. The Cytoplasmic portion of the chain corresponds to 128–139 (EILWRLGATIWQ). The helical transmembrane segment at 140 to 160 (LLAFILAFFLAIILLIIALYL) threads the bilayer. The Extracellular segment spans residues 161–163 (QQN). Residues 164-184 (WWTLLVDLLWLLLFMAILIWM) form a helical membrane-spanning segment. Residues 185 to 366 (YFHGPRHTDE…HGPVQLSYYD (182 aa)) are Cytoplasmic-facing. A CTAR1 region spans residues 194–232 (EHHHDDSLPHPQQATDDSSHESDSNSNEGRHHLLVSGAG). The interval 194-366 (EHHHDDSLPH…HGPVQLSYYD (173 aa)) is disordered. Positions 204–208 (PQQAT) match the Interaction with host TRAF proteins motif. Residues 210 to 224 (DSSHESDSNSNEGRH) are compositionally biased toward basic and acidic residues. Low complexity-rich tracts occupy residues 251 to 267 (NGPQDPDNTDDNGPQDP) and 337 to 346 (PHLPTLLLGT). The CTAR2 stretch occupies residues 332–366 (GGGGDPHLPTLLLGTSGSGGDDDDPHGPVQLSYYD).

It belongs to the herpesviridae LMP-1 family. Interacts (via PXQXT motif) with host tumor necrosis factor receptor-associated factor (TRAF) proteins TRAF1, TRAF2, TRAF3 and TRAF5. Interacts with human protein ZMYND11; leading to negatively regulate NF-kappa-B activation. Interacts with host UBE2I; this interaction induces the sumoylation of various cellular proteins. Interacts with host IRF7. Post-translationally, ubiquitinated on the N-terminus.

It is found in the host cell membrane. Functionally, acts as a CD40 functional homolog to prevent apoptosis of infected B-lymphocytes and drive their proliferation. Functions as a constitutively active tumor necrosis factor receptor that induces the activation of several signaling pathways, including those of the NF-kappa-B family. LMP1 signaling leads to up-regulation of antiapoptotic proteins and provide growth signals in latently infected cells. Interacts with host UBE2I and subsequently affects the sumoylation state of several cellular proteins. For example, induces the sumoylation of host IRF7 thereby limiting its transcriptional activity and modulating the activation of innate immune responses. Also inhibits host IFN-alpha-stimulated STAT2 nuclear translocation and interferon-stimulated response element transcriptional activity by interacting with and inhibiting host TYK2. Induces SUMO expression during viral latency thereby dysregulating the host sumoylation processes. This is Latent membrane protein 1 (LMP1) from Homo sapiens (Human).